The chain runs to 574 residues: Kelch-like protein 18 (574 aa).

Residues 66–105 (MFTNDMMECKQDEIVMQGMDPSALEALINFAYNGNLAIDQ) enclose the BTB domain. One can recognise a BACK domain in the interval 140 to 242 (CLGVRQFAET…RPQFLSDRVQ (103 aa)). Kelch repeat units follow at residues 289–336 (LIYA…VVNG), 337–383 (LLYA…VLDG), 384–430 (QIYV…VFEG), 432–477 (IYVS…SLGS), 479–524 (MFVC…ASCG), and 525–571 (RLYA…CIPL).

In terms of assembly, interacts with AURKA. Interacts (via BTB domain) with CUL3. Interacts (via kelch repeats) with UNC119.

The protein operates within protein modification; protein ubiquitination. In terms of biological role, substrate-specific adapter of a BCR (BTB-CUL3-RBX1) E3 ubiquitin-protein ligase complex required for mitotic progression and cytokinesis. The BCR(KLHL18) E3 ubiquitin ligase complex mediates the ubiquitination of AURKA leading to its activation at the centrosome which is required for initiating mitotic entry. Regulates light-and dark-dependent alpha-transducin localization changes in rod photoreceptors through UNC119 ubiquitination and degradation. Preferentially ubiquitinates the unphosphorylated form of UNC119 over the phosphorylated form. In the presence of UNC119, under dark-adapted conditions alpha-transducin mislocalizes from the outer segment to the inner part of rod photoreceptors which leads to decreased photoreceptor damage caused by light. In Homo sapiens (Human), this protein is Kelch-like protein 18 (KLHL18).